The sequence spans 781 residues: Zinc finger protein klf1 (781 aa).

2 C2H2-type zinc fingers span residues 17–41 (YKCD…FRSH) and 47–70 (FICP…NQKH).

Its subcellular location is the nucleus. The protein localises to the cytoplasm. The protein resides in the cytoskeleton. It is found in the spindle. In terms of biological role, required for maintaining cell viability in nitrogen-deficient stationary phase (G0) cells. This chain is Zinc finger protein klf1 (klf1), found in Schizosaccharomyces pombe (strain 972 / ATCC 24843) (Fission yeast).